Here is a 397-residue protein sequence, read N- to C-terminus: MERNTPKKAVHFGAGNIGRGFVACFLHESGYEVIFAEVNDATVSKLNTHKSYKVIEVGAEGTTEKTITNYRAINSRSNEAALVEEIATADVVTCSVGPNILKFLAPVIAKGLAARSTDLTPAAVIACENAIGATDTLAEFIKSPENTNPALLEDYDKRATFANSAIDRIVPAQDPDAGLDVKLEKFYEWVVEKTPFKEWAVPDIKGIKWVDNLQPFIERKLYTVNTGHATAAYYGYTRRKSTVYDALQDKDIRDEVKNALKETADLITEKHGIDEEEQKQYVDKIVRRISNPHLEDAVERVGRAPLRKLSRKERFIGPAAELAENGKDCSALLDAAEMAFRFQNVEGDDESFELAKIMEEKKPEEVVQEVCGLQPSEKLYPQVVDIVKRVQADSNEE.

9–20 (AVHFGAGNIGRG) provides a ligand contact to NAD(+). K220 is a catalytic residue.

This sequence belongs to the mannitol dehydrogenase family. As to quaternary structure, monomer.

The catalysed reaction is D-mannitol 1-phosphate + NAD(+) = beta-D-fructose 6-phosphate + NADH + H(+). Catalyzes the NAD(H)-dependent interconversion of D-fructose 6-phosphate and D-mannitol 1-phosphate in the mannitol metabolic pathway. In Podospora anserina (strain S / ATCC MYA-4624 / DSM 980 / FGSC 10383) (Pleurage anserina), this protein is Mannitol-1-phosphate 5-dehydrogenase.